The following is a 277-amino-acid chain: Bifunctional protein FolD (277 aa).

NADP(+)-binding positions include 164–166 (GRS), serine 189, and valine 230.

The protein belongs to the tetrahydrofolate dehydrogenase/cyclohydrolase family. In terms of assembly, homodimer.

It carries out the reaction (6R)-5,10-methylene-5,6,7,8-tetrahydrofolate + NADP(+) = (6R)-5,10-methenyltetrahydrofolate + NADPH. The enzyme catalyses (6R)-5,10-methenyltetrahydrofolate + H2O = (6R)-10-formyltetrahydrofolate + H(+). The protein operates within one-carbon metabolism; tetrahydrofolate interconversion. Its function is as follows. Catalyzes the oxidation of 5,10-methylenetetrahydrofolate to 5,10-methenyltetrahydrofolate and then the hydrolysis of 5,10-methenyltetrahydrofolate to 10-formyltetrahydrofolate. The polypeptide is Bifunctional protein FolD (Exiguobacterium sibiricum (strain DSM 17290 / CCUG 55495 / CIP 109462 / JCM 13490 / 255-15)).